A 358-amino-acid chain; its full sequence is Uroporphyrinogen decarboxylase (358 aa).

Substrate is bound by residues 27–31 (RQAGR), Asp77, Tyr154, Ser209, and His330.

It belongs to the uroporphyrinogen decarboxylase family. Homodimer.

It localises to the cytoplasm. The enzyme catalyses uroporphyrinogen III + 4 H(+) = coproporphyrinogen III + 4 CO2. It participates in porphyrin-containing compound metabolism; protoporphyrin-IX biosynthesis; coproporphyrinogen-III from 5-aminolevulinate: step 4/4. In terms of biological role, catalyzes the decarboxylation of four acetate groups of uroporphyrinogen-III to yield coproporphyrinogen-III. The sequence is that of Uroporphyrinogen decarboxylase from Acinetobacter baylyi (strain ATCC 33305 / BD413 / ADP1).